The primary structure comprises 88 residues: Small ribosomal subunit protein bS16 (88 aa).

Belongs to the bacterial ribosomal protein bS16 family.

This Thermus aquaticus protein is Small ribosomal subunit protein bS16.